A 796-amino-acid polypeptide reads, in one-letter code: MAINNTGSRRLLVTLTALFAALCGLYLLIGGGWLVAIGGSWYYPIAGLVMLGVAWMLWRSKRAALWLYAALLLGTMIWGVWEVGFDFWALTPRSDILVFFGIWLILPFVWRRLVIPASGAVAALVVALLISGGILTWAGFNDPQEINGTLSADATPAEAISPVADQDWPAYGRNQEGQRFSPLKQINADNVHNLKEAWVFRTGDVKQPNDPGEITNEVTPIKVGDTLYLCTAHQRLFALDAASGKEKWHYDPELKTNESFQHVTCRGVSYHEAKAETASPEVMADCPRRIILPVNDGRLIAINAENGKLCETFANKGVLNLQSNMPDTKPGLYEPTSPPIITDKTIVMAGSVTDNFSTRETSGVIRGFDVNTGELLWAFDPGAKDPNAIPSDEHTFTFNSPNSWAPAAYDAKLDLVYLPMGVTTPDIWGGNRTPEQERYASSILALNATTGKLAWSYQTVHHDLWDMDLPAQPTLADITVNGQKVPVIYAPAKTGNIFVLDRRNGELVVPAPEKPVPQGAAKGDYVTPTQPFSELSFRPTKDLSGADMWGATMFDQLVCRVMFHQMRYEGIFTPPSEQGTLVFPGNLGMFEWGGISVDPNREVAIANPMALPFVSKLIPRGPGNPMEQPKDAKGTGTESGIQPQYGVPYGVTLNPFLSPFGLPCKQPAWGYISALDLKTNEVVWKKRIGTPQDSMPFPMPVPVPFNMGMPMLGGPISTAGNVLFIAATADNYLRAYNMSNGEKLWQGRLPAGGQATPMTYEVNGKQYVVISAGGHGSFGTKMGDYIVAYALPDDVK.

Residues 1 to 10 are Cytoplasmic-facing; it reads MAINNTGSRR. Residues 11-37 form a helical membrane-spanning segment; it reads LLVTLTALFAALCGLYLLIGGGWLVAI. Residues 38 to 40 are Periplasmic-facing; it reads GGS. Residues 41–58 traverse the membrane as a helical segment; the sequence is WYYPIAGLVMLGVAWMLW. Over 59–62 the chain is Cytoplasmic; that stretch reads RSKR. Residues 63-81 form a helical membrane-spanning segment; the sequence is AALWLYAALLLGTMIWGVW. Topologically, residues 82 to 95 are periplasmic; that stretch reads EVGFDFWALTPRSD. Residues 96–110 traverse the membrane as a helical segment; it reads ILVFFGIWLILPFVW. The Cytoplasmic segment spans residues 111-118; the sequence is RRLVIPAS. The helical transmembrane segment at 119 to 141 threads the bilayer; the sequence is GAVAALVVALLISGGILTWAGFN. The Periplasmic portion of the chain corresponds to 142–796; it reads DPQEINGTLS…VAYALPDDVK (655 aa). D466 serves as the catalytic Proton acceptor.

It belongs to the bacterial PQQ dehydrogenase family. As to quaternary structure, monomer. Requires pyrroloquinoline quinone as cofactor.

Its subcellular location is the cell inner membrane. It carries out the reaction a ubiquinone + D-glucose = D-glucono-1,5-lactone + a ubiquinol. GDH is probably involved in energy conservation rather than in sugar metabolism. This is Quinoprotein glucose dehydrogenase (gcd) from Escherichia coli (strain K12).